Consider the following 421-residue polypeptide: MDLEAKVKKMGLGHEQGFGAPCLKCKEKCEGFELHFWRKICRNCKCGQEEHDVLLSNEEDRKVGKLFEDTKYTTLIAKLKSDGIPMYKRNVMILTNPVAAKKNVSINTVTYEWAPPVQNQALARQYMQMLPKEKQPVAGSEGAQYRKKQLAKQLPAHDQDPSKCHELSPKEVKEMEQFVKKYKSEALGVGDVKLPRDMNTQGPNKMYIPGGDRSTTTAVGAMEDKSAEHKRTQYSCYCCKLSMKEGDPAIYAERAGYDKLWHPACFVCSTCHELLVDMIYFWKNGKLYCGRHYCDSEKPRCAGCDELIFSNEYTQAENQNWHLKHFCCFDCDNILAGEIYVMVNDKPVCKPCYVKNHAVVCQGCHNAIDPEVQRVTYNNFSWHASTECFLCSCCSKCLIGQKFMPVEGMVFCSVECKKMMS.

Positions 92-199 constitute a PET domain; that stretch reads MILTNPVAAK…GDVKLPRDMN (108 aa). Disordered stretches follow at residues 133–164 and 193–213; these read EKQP…PSKC and KLPR…GGDR. A compositionally biased stretch (basic and acidic residues) spans 155-164; it reads PAHDQDPSKC. LIM zinc-binding domains lie at 234-297, 299-359, and 362-421; these read YSCY…CDSE, PRCA…NHAV, and QGCH…KMMS.

The protein belongs to the prickle / espinas / testin family. In terms of assembly, interacts via LIM domain 1 with ZYX. Interacts (via LIM domain 3) with ENAH and VASP. Interacts with ALKBH4, talin, actin, alpha-actinin, GRIP1 and PXN. Interacts (via LIM domain 2) with ACTL7A (via N-terminus). Heterodimer with ACTL7A; the heterodimer interacts with ENAH to form a heterotrimer.

It localises to the cytoplasm. It is found in the cell junction. The protein localises to the focal adhesion. In terms of biological role, scaffold protein that may play a role in cell adhesion, cell spreading and in the reorganization of the actin cytoskeleton. Plays a role in the regulation of cell proliferation. May act as a tumor suppressor. This chain is Testin (TES), found in Ovis aries (Sheep).